We begin with the raw amino-acid sequence, 662 residues long: PAN2-PAN3 deadenylation complex subunit PAN3 (662 aa).

Disordered regions lie at residues 1-26 (MASA…AREN) and 59-131 (TTYQ…RAET). The C3H1-type zinc-finger motif lies at 26-55 (NAKDTLCRNVTIYGRCRYEDKGCAFNHDPH). Residues 72–85 (DSPSFTPSLLSSNG) show a composition bias toward polar residues. Low complexity predominate over residues 86–102 (SSPTTASVTAKKAATIS). Residues 114–126 (RNITSRSNTSTPS) show a composition bias toward polar residues. The segment at 265–525 (QTLPNTQLPA…NIDIFITGIS (261 aa)) is pseudokinase domain. Residues arginine 317, 366 to 373 (DYHPLSKT), and 425 to 426 (SK) contribute to the ATP site. A coiled-coil region spans residues 526 to 564 (SQLMSTFDSALHLDDELTSDLSRELENGRLVRLVTKLNF). The tract at residues 565 to 662 (VNERPEYEHD…ALLKPTRRLH (98 aa)) is knob domain.

This sequence belongs to the protein kinase superfamily. PAN3 family. In terms of assembly, homodimer. Forms a heterotrimer with a catalytic subunit pan2 to form the poly(A)-nuclease (PAN) deadenylation complex. Interacts (via PAM-2 motif) with poly(A)-binding protein pab1 (via PABC domain), conferring substrate specificity of the enzyme complex.

The protein localises to the cytoplasm. Its function is as follows. Regulatory subunit of the poly(A)-nuclease (PAN) deadenylation complex, one of two cytoplasmic mRNA deadenylases involved in mRNA turnover. PAN specifically shortens poly(A) tails of RNA and the activity is stimulated by poly(A)-binding protein pab1. PAN deadenylation is followed by rapid degradation of the shortened mRNA tails by the CCR4-NOT complex. Deadenylated mRNAs are then degraded by two alternative mechanisms, namely exosome-mediated 3'-5' exonucleolytic degradation, or deadenylation-dependent mRNA decaping and subsequent 5'-3' exonucleolytic degradation by xrn1. May also be involved in post-transcriptional maturation of mRNA poly(A) tails. pan3 acts as a positive regulator for PAN activity, recruiting the catalytic subunit pan2 to mRNA via its interaction with RNA and with pab1. The polypeptide is PAN2-PAN3 deadenylation complex subunit PAN3 (Aspergillus oryzae (strain ATCC 42149 / RIB 40) (Yellow koji mold)).